We begin with the raw amino-acid sequence, 894 residues long: Disease resistance protein SUMM2 (894 aa).

A coiled-coil region spans residues 31–71; sequence ELSKNVVAMKKDMEVLKKKRDDVKRRVDIEEFTRRRERLSQ. Residues 140–443 enclose the NB-ARC domain; sequence TLATPIARIE…CEGFIDENES (304 aa). Residue 183-190 participates in ATP binding; the sequence is GMGGVGKT. 7 LRR repeats span residues 517–538, 539–561, 564–586, 588–610, 611–633, 634–656, and 660–681; these read SVRRMSLMENEIEILSGSPECL, ELTTLFLQKNDSLLHISDEFFRC, MLVVLDLSGNSSLRKLPNQISKL, SLRYLDLSWTYIKRLPVGLQELK, KLRYLRLDYMKRLKSISGISNIS, SLRKLQLLQSKMSLDMSLVEELQ, and HLEVLNISIKSSLVVEKLLNAP.

It belongs to the disease resistance NB-LRR family. As to quaternary structure, interacts with PAT1.

With respect to regulation, negatively regulated by the MEKK1-MKK1-MKK2-MPK4 kinase cascade. Disease resistance protein that mediates defense responses against the bacterial pathogen Pseudomonas syringae pv tomato strain DC3000, and the virulent oomycete Hyaloperonospora arabidopsidis isolate Noco2. Becomes active when the MEKK1-MKK1-MKK2-MPK4 kinase cascade is disrupted by the microbial effector hopAI1. Does not seem to be required for the activation of MPK4 by flg22, or flg22-induced up-regulation of PAD3. Functions downstream of MEKK2/SUMM1 in immune responses, including cell death and defense responses. This chain is Disease resistance protein SUMM2, found in Arabidopsis thaliana (Mouse-ear cress).